We begin with the raw amino-acid sequence, 467 residues long: 2-succinylbenzoate--CoA ligase (467 aa).

Belongs to the ATP-dependent AMP-binding enzyme family. MenE subfamily.

The enzyme catalyses 2-succinylbenzoate + ATP + CoA = 2-succinylbenzoyl-CoA + AMP + diphosphate. Its pathway is quinol/quinone metabolism; 1,4-dihydroxy-2-naphthoate biosynthesis; 1,4-dihydroxy-2-naphthoate from chorismate: step 5/7. The protein operates within quinol/quinone metabolism; menaquinone biosynthesis. Converts 2-succinylbenzoate (OSB) to 2-succinylbenzoyl-CoA (OSB-CoA). The sequence is that of 2-succinylbenzoate--CoA ligase from Listeria monocytogenes serotype 4b (strain F2365).